We begin with the raw amino-acid sequence, 688 residues long: G protein-coupled receptor kinase 3 (688 aa).

Positions 1–190 are N-terminal; the sequence is MADLEAVLAD…ELNIHLSMND (190 aa). Residues 54–175 form the RGS domain; that stretch reads TFDKIFNQKI…MESEKFTRFC (122 aa). One can recognise a Protein kinase domain in the interval 191–453; the sequence is FSVHRIIGRG…ARELKEHIFF (263 aa). Residues 197–205 and K220 each bind ATP; that span reads IGRGGFGEV. The active-site Proton acceptor is D317. Residues 454-521 form the AGC-kinase C-terminal domain; sequence KGIDWQYVYL…MISERWQQEV (68 aa). A PH domain is found at 558–652; the sequence is DCIMHGYMLK…WLKELTCTFN (95 aa).

It belongs to the protein kinase superfamily. AGC Ser/Thr protein kinase family. GPRK subfamily. Interacts with GIT1. Post-translationally, ubiquitinated. Expressed in brain cortex, hippocampus, striatum, hypothalamus, cerebellum and brainstem (at protein level).

The protein localises to the postsynapse. It is found in the presynapse. The catalysed reaction is [beta-adrenergic receptor] + ATP = [beta-adrenergic receptor]-phosphate + ADP + H(+). Its function is as follows. Specifically phosphorylates the agonist-occupied form of the beta-adrenergic and closely related receptors. The protein is G protein-coupled receptor kinase 3 of Rattus norvegicus (Rat).